Consider the following 133-residue polypeptide: ATP synthase epsilon chain, chloroplastic (133 aa).

Belongs to the ATPase epsilon chain family. In terms of assembly, F-type ATPases have 2 components, CF(1) - the catalytic core - and CF(0) - the membrane proton channel. CF(1) has five subunits: alpha(3), beta(3), gamma(1), delta(1), epsilon(1). CF(0) has three main subunits: a, b and c.

The protein localises to the plastid. It is found in the chloroplast thylakoid membrane. In terms of biological role, produces ATP from ADP in the presence of a proton gradient across the membrane. The protein is ATP synthase epsilon chain, chloroplastic of Mesostigma viride (Green alga).